Here is a 1624-residue protein sequence, read N- to C-terminus: ATP-binding cassette sub-family A member 9 (1624 aa).

Residues 31 to 51 form a helical membrane-spanning segment; sequence LLEWLFSFLLVLFLYLFFSNL. 2 N-linked (GlcNAc...) asparagine glycosylation sites follow: asparagine 120 and asparagine 195. Transmembrane regions (helical) follow at residues 221–243, 269–289, 300–320, 329–349, 354–374, and 398–418; these read VATD…YVSV, SWGL…ALIV, FVMV…LAFL, FLTG…GFPA, LPAF…TVGM, and LIIA…VLTL. Residues 481 to 716 form the ABC transporter 1 domain; it reads IRIKNLKKEY…WGIGYHLSLH (236 aa). 517-524 is an ATP binding site; the sequence is GHSGAGKT. The chain crosses the membrane as a helical span at residues 864–884; sequence LWTILLLFGISFIPQLLEHLF. Asparagine 949 carries N-linked (GlcNAc...) asparagine glycosylation. 6 consecutive transmembrane segments (helical) span residues 1026-1046, 1065-1085, 1108-1128, 1136-1156, 1163-1183, and 1200-1220; these read TFFW…SSIG, AYWF…LLLM, ILCS…ISFI, SGIW…ATDL, GLFF…LFIF, and EIVY…LFIL. The ABC transporter 2 domain occupies 1288–1521; the sequence is LRKEYAGKKK…FGKDYLLEMK (234 aa). 1326 to 1333 serves as a coordination point for ATP; it reads GHNGAGKS.

The protein belongs to the ABC transporter superfamily. ABCA family. As to expression, widely expressed with higher expression in heart.

Its subcellular location is the membrane. In terms of biological role, transporter that may play a role in monocyte differentiation and lipid transport and homeostasis. The polypeptide is ATP-binding cassette sub-family A member 9 (ABCA9) (Homo sapiens (Human)).